Here is a 336-residue protein sequence, read N- to C-terminus: G-protein coupled receptor homolog FPV027 (336 aa).

Residues 1–31 are Extracellular-facing; it reads MSMNNITSKMNQDSYGYFQLHMSDFTRVSLS. A glycan (N-linked (GlcNAc...) asparagine; by host) is linked at Asn5. The chain crosses the membrane as a helical span at residues 32 to 52; sequence IVFTLVFLVGIIGNAVIIWFI. Over 53–63 the chain is Cytoplasmic; that stretch reads GFKWTKTISTL. The helical transmembrane segment at 64-84 threads the bilayer; it reads LFINLALADSLFLIFIPVYTV. Residues 85-101 are Extracellular-facing; that stretch reads YVLSNFHWYLGEFLCRV. Cys99 and Cys178 are disulfide-bonded. A helical transmembrane segment spans residues 102-122; the sequence is SSFFFTTNMYASMFLLTFISI. Residues 123–143 are Cytoplasmic-facing; it reads DKYLTLTSHRLVYKYRKYRNY. The helical transmembrane segment at 144–164 threads the bilayer; the sequence is YVCIGAIWCISIALGVPTLYY. The Extracellular segment spans residues 165 to 200; that stretch reads KRVILSSSRNETRCISYYGDDKHTAITIYRIIVCIR. An N-linked (GlcNAc...) asparagine; by host glycan is attached at Asn174. A helical transmembrane segment spans residues 201 to 221; the sequence is FIIGYVFPMTVILLSYALIVY. Residues 222–240 are Cytoplasmic-facing; that stretch reads KVKFINKPPNRSFMITTAS. A helical membrane pass occupies residues 241 to 261; the sequence is IFVFLACWTPHHVLNIISLYG. Residues 262-276 lie on the Extracellular side of the membrane; sequence LKSTSMYNYIKESIP. The helical transmembrane segment at 277–297 threads the bilayer; the sequence is FVNAIAFVYSAINPIIYIFVI. Residues 298-336 lie on the Cytoplasmic side of the membrane; sequence RLTSTYDSDTMDELRSALLDEETTSTEDCSDIEISDISR.

Belongs to the G-protein coupled receptor 1 family.

Its subcellular location is the host cell membrane. This is G-protein coupled receptor homolog FPV027 from Vertebrata (FPV).